The sequence spans 464 residues: Argininosuccinate lyase (464 aa).

This sequence belongs to the lyase 1 family. Argininosuccinate lyase subfamily.

The protein resides in the cytoplasm. The enzyme catalyses 2-(N(omega)-L-arginino)succinate = fumarate + L-arginine. It functions in the pathway amino-acid biosynthesis; L-arginine biosynthesis; L-arginine from L-ornithine and carbamoyl phosphate: step 3/3. This is Argininosuccinate lyase from Moorella thermoacetica (strain ATCC 39073 / JCM 9320).